Here is a 470-residue protein sequence, read N- to C-terminus: Rhamnulokinase (470 aa).

Ala12–Arg16 is an ATP binding site. Substrate is bound by residues Ala80 and His237–Thr239. Asp238 acts as the Proton acceptor in catalysis. Thr259 contributes to the ATP binding site. Asn296 contributes to the substrate binding site. Gln304 serves as a coordination point for ATP. Residues Cys353 and Cys370 are joined by a disulfide bond. Gly402 is an ATP binding site.

The protein belongs to the rhamnulokinase family. Mg(2+) is required as a cofactor.

The catalysed reaction is L-rhamnulose + ATP = L-rhamnulose 1-phosphate + ADP + H(+). Its pathway is carbohydrate degradation; L-rhamnose degradation; glycerone phosphate from L-rhamnose: step 2/3. Functionally, involved in the catabolism of L-rhamnose (6-deoxy-L-mannose). Catalyzes the transfer of the gamma-phosphate group from ATP to the 1-hydroxyl group of L-rhamnulose to yield L-rhamnulose 1-phosphate. In Oceanobacillus iheyensis (strain DSM 14371 / CIP 107618 / JCM 11309 / KCTC 3954 / HTE831), this protein is Rhamnulokinase.